The sequence spans 117 residues: UPF0122 protein Teth514_1714 (117 aa).

It belongs to the UPF0122 family.

Might take part in the signal recognition particle (SRP) pathway. This is inferred from the conservation of its genetic proximity to ftsY/ffh. May be a regulatory protein. In Thermoanaerobacter sp. (strain X514), this protein is UPF0122 protein Teth514_1714.